Here is a 317-residue protein sequence, read N- to C-terminus: MHILEFEKPIAELEGKIEELRHLSDGGDVNIADEVSKLQAKVDKLLRSTYAKLTPWQKTQVARHPERPHTLAYISTLIEDFTPLAGDRAFAEDEAIIGGLGRFRGRSVMIIGHEKGHDTETRLKHNFGMAKPEGYRKAKRLMEMADHFQVPIITLVDTAGAYPGVDAEARGQAEAIARSIETCLNVRVPLVSVIIGEGGSGGAIALATGNTVLMLEHAIYSVISPEGCASILWRSAENAKDAAEQLRLTAQDLHKLSIIDSVVPEPMGGAHRNPDLMMQTLSMALDSALRDLSGLDGGVLRARRREKFLEMGRAGLS.

Positions 41 to 291 constitute a CoA carboxyltransferase C-terminal domain; the sequence is KVDKLLRSTY…SMALDSALRD (251 aa).

This sequence belongs to the AccA family. As to quaternary structure, acetyl-CoA carboxylase is a heterohexamer composed of biotin carboxyl carrier protein (AccB), biotin carboxylase (AccC) and two subunits each of ACCase subunit alpha (AccA) and ACCase subunit beta (AccD).

The protein resides in the cytoplasm. It catalyses the reaction N(6)-carboxybiotinyl-L-lysyl-[protein] + acetyl-CoA = N(6)-biotinyl-L-lysyl-[protein] + malonyl-CoA. It participates in lipid metabolism; malonyl-CoA biosynthesis; malonyl-CoA from acetyl-CoA: step 1/1. In terms of biological role, component of the acetyl coenzyme A carboxylase (ACC) complex. First, biotin carboxylase catalyzes the carboxylation of biotin on its carrier protein (BCCP) and then the CO(2) group is transferred by the carboxyltransferase to acetyl-CoA to form malonyl-CoA. This Paramagnetospirillum magneticum (strain ATCC 700264 / AMB-1) (Magnetospirillum magneticum) protein is Acetyl-coenzyme A carboxylase carboxyl transferase subunit alpha.